Consider the following 198-residue polypeptide: DnaJ homolog subfamily C member 12 (198 aa).

Position 1 is an N-acetylmethionine (methionine 1). Positions 14–79 (DYYTLLGCDE…ESRARYDHWR (66 aa)) constitute a J domain. The segment at 121-183 (TNTAQNKERS…CGHLHFRWSG (63 aa)) is disordered. Over residues 126–156 (NKERSEQRETKQGDPDSTPEKMMQKESESPE) the composition is skewed to basic and acidic residues. A phosphoserine mark is found at serine 160, serine 166, and serine 182.

Interacts with HSPA8. Interacts with TPH1. Interacts with TPH2.

Its subcellular location is the cytoplasm. Functionally, probable co-chaperone that participates in the proper folding of biopterin-dependent aromatic amino acid hydroxylases, which include phenylalanine-4-hydroxylase (PAH), tyrosine 3-monooxygenase (TH) and peripheral and neuronal tryptophan hydroxylases (TPH1 and TPH2). The polypeptide is DnaJ homolog subfamily C member 12 (Dnajc12) (Rattus norvegicus (Rat)).